The primary structure comprises 325 residues: Aldo-keto reductase family 1 member A1 (325 aa).

Threonine 2 is modified (N-acetylthreonine). Residue serine 4 is modified to Phosphoserine. NADP(+)-binding positions include 11-20 (GQKMPLIGLG), threonine 21, and tryptophan 22. Serine 38 is modified (phosphoserine). An NADP(+)-binding site is contributed by aspartate 45. The Proton donor role is filled by tyrosine 50. Residue lysine 127 is modified to N6-acetyllysine; alternate. Lysine 127 is modified (N6-succinyllysine; alternate). An N6-succinyllysine modification is found at lysine 145. NADP(+)-binding residues include serine 162, asparagine 163, serine 211, leucine 213, serine 215, serine 216, lysine 263, serine 264, isoleucine 265, arginine 269, glutamine 272, and asparagine 273. Position 211 is a phosphoserine (serine 211).

The protein belongs to the aldo/keto reductase family. Monomer. In terms of tissue distribution, widely expressed.

Its subcellular location is the cytoplasm. It localises to the cytosol. The protein localises to the apical cell membrane. It carries out the reaction a primary alcohol + NADP(+) = an aldehyde + NADPH + H(+). The catalysed reaction is L-gulonate + NADP(+) = aldehydo-D-glucuronate + NADPH + H(+). The enzyme catalyses L-gulono-1,4-lactone + NADP(+) = D-glucurono-3,6-lactone + NADPH + H(+). It catalyses the reaction allyl alcohol + NADP(+) = acrolein + NADPH + H(+). It carries out the reaction glycerol + NADP(+) = D-glyceraldehyde + NADPH + H(+). The catalysed reaction is glycerol + NADP(+) = L-glyceraldehyde + NADPH + H(+). The enzyme catalyses hydroxyacetone + NADP(+) = methylglyoxal + NADPH + H(+). It catalyses the reaction 3-deoxyfructose + NADP(+) = 3-deoxyglucosone + NADPH + H(+). It carries out the reaction (R)-mevalonate + NADP(+) = (R)-mevaldate + NADPH + H(+). The catalysed reaction is pyridine 3-methanol + NADP(+) = pyridine-3-carbaldehyde + NADPH + H(+). The enzyme catalyses S-nitroso-CoA + NADPH + H(+) = sulfinamide-CoA + NADP(+). It catalyses the reaction S-nitrosoglutathione + NADPH + H(+) = S-(hydroxysulfenamide)glutathione + NADP(+). Catalyzes the NADPH-dependent reduction of a wide variety of carbonyl-containing compounds to their corresponding alcohols. Displays enzymatic activity towards endogenous metabolites such as aromatic and aliphatic aldehydes, ketones, monosaccharides and bile acids, with a preference for negatively charged substrates, such as glucuronate and succinic semialdehyde. Plays an important role in ascorbic acid biosynthesis by catalyzing the reduction of D-glucuronic acid and D-glucurono-gamma-lactone. Functions as a detoxifiying enzyme by reducing a range of toxic aldehydes. Reduces methylglyoxal and 3-deoxyglucosone, which are present at elevated levels under hyperglycemic conditions and are cytotoxic. Involved in the detoxification of lipid-derived aldehydes like acrolein. Plays a role in the activation of procarcinogens, such as polycyclic aromatic hydrocarbon trans-dihydrodiols, and in the metabolism of various xenobiotics and drugs. Also acts as an inhibitor of protein S-nitrosylation by mediating degradation of S-nitroso-coenzyme A (S-nitroso-CoA), a cofactor required to S-nitrosylate proteins. S-nitroso-CoA reductase activity is involved in reprogramming intermediary metabolism in renal proximal tubules, notably by inhibiting protein S-nitrosylation of isoform 2 of PKM (PKM2). Also acts as a S-nitroso-glutathione reductase by catalyzing the NADPH-dependent reduction of S-nitrosoglutathione. Displays no reductase activity towards retinoids. This Mus musculus (Mouse) protein is Aldo-keto reductase family 1 member A1.